Consider the following 201-residue polypeptide: Small ribosomal subunit protein uS4c (201 aa).

The S4 RNA-binding domain maps to 91–153 (MRLDNIVFRL…NASKKIVETN (63 aa)).

This sequence belongs to the universal ribosomal protein uS4 family. In terms of assembly, part of the 30S ribosomal subunit. Contacts protein S5. The interaction surface between S4 and S5 is involved in control of translational fidelity.

The protein localises to the plastid. The protein resides in the cyanelle. Its function is as follows. One of the primary rRNA binding proteins, it binds directly to 16S rRNA where it nucleates assembly of the body of the 30S subunit. Functionally, with S5 and S12 plays an important role in translational accuracy. The polypeptide is Small ribosomal subunit protein uS4c (rps4) (Cyanophora paradoxa).